A 502-amino-acid polypeptide reads, in one-letter code: Alpha-ketoglutarate-dependent dioxygenase FTO (502 aa).

Residues 32–324 (TPKDDEFYQQ…SSTHRVAECS (293 aa)) are fe2OG dioxygenase domain. Residues Arg96 and Tyr108 each coordinate substrate. Asn202 contacts 2-oxoglutarate. A loop L1; predicted to block binding of double-stranded DNA or RNA region spans residues 210–221 (PYLKEEPYFGMG). Lys213 bears the N6-acetyllysine mark. 2 residues coordinate Fe cation: His228 and Asp230. Residue 228 to 231 (HHDE) coordinates substrate. A 2-oxoglutarate-binding site is contributed by Tyr292. Residue His304 participates in Fe cation binding. 2-oxoglutarate contacts are provided by residues 313 to 315 (RFS), Thr317, and Arg319.

It belongs to the fto family. In terms of assembly, monomer. May also exist as homodimer. Requires Fe(2+) as cofactor. Ubiquitous. Highly expressed in teeth and weakly in bone.

The protein resides in the nucleus. The protein localises to the nucleus speckle. It is found in the cytoplasm. The enzyme catalyses a 5'-end (N(7)-methyl 5'-triphosphoguanosine)-(N(6),2'-O-dimethyladenosine) in mRNA + 2-oxoglutarate + O2 = a 5'-end (N(7)-methyl 5'-triphosphoguanosine)-(2'-O-methyladenosine) in mRNA + formaldehyde + succinate + CO2. The catalysed reaction is an N(6)-methyladenosine in mRNA + 2-oxoglutarate + O2 = an adenosine in mRNA + formaldehyde + succinate + CO2. It catalyses the reaction N(6)-methyladenosine in U6 snRNA + 2-oxoglutarate + O2 = adenosine in U6 snRNA + formaldehyde + succinate + CO2. It carries out the reaction a 5'-end (N(7)-methyl 5'-triphosphoguanosine)-(N(6),2'-O-dimethyladenosine) in U6 snRNA + 2-oxoglutarate + O2 = a 5'-end (N(7)-methyl 5'-triphosphoguanosine)-(2'-O-methyladenosine) in U6 snRNA + formaldehyde + succinate + CO2. The enzyme catalyses an N(1)-methyladenosine in tRNA + 2-oxoglutarate + O2 = an adenosine in tRNA + formaldehyde + succinate + CO2. Its activity is regulated as follows. Activated by ascorbate. Inhibited by N-oxalylglycine, fumarate and succinate. Its function is as follows. RNA demethylase that mediates oxidative demethylation of different RNA species, such as mRNAs, tRNAs and snRNAs, and acts as a regulator of fat mass, adipogenesis and energy homeostasis. Specifically demethylates N(6)-methyladenosine (m6A) RNA, the most prevalent internal modification of messenger RNA (mRNA) in higher eukaryotes. M6A demethylation by FTO affects mRNA expression and stability. Also able to demethylate m6A in U6 small nuclear RNA (snRNA). Mediates demethylation of N(6),2'-O-dimethyladenosine cap (m6A(m)), by demethylating the N(6)-methyladenosine at the second transcribed position of mRNAs and U6 snRNA. Demethylation of m6A(m) in the 5'-cap by FTO affects mRNA stability by promoting susceptibility to decapping. Also acts as a tRNA demethylase by removing N(1)-methyladenine from various tRNAs. Has no activity towards 1-methylguanine. Has no detectable activity towards double-stranded DNA. Also able to repair alkylated DNA and RNA by oxidative demethylation: demethylates single-stranded RNA containing 3-methyluracil, single-stranded DNA containing 3-methylthymine and has low demethylase activity towards single-stranded DNA containing 1-methyladenine or 3-methylcytosine. Ability to repair alkylated DNA and RNA is however unsure in vivo. Involved in the regulation of fat mass, adipogenesis and body weight, thereby contributing to the regulation of body size and body fat accumulation. Involved in the regulation of thermogenesis and the control of adipocyte differentiation into brown or white fat cells. Regulates activity of the dopaminergic midbrain circuitry via its ability to demethylate m6A in mRNAs. The protein is Alpha-ketoglutarate-dependent dioxygenase FTO of Rattus norvegicus (Rat).